The sequence spans 64 residues: Large ribosomal subunit protein eL37 (64 aa).

The Zn(2+) site is built by Cys-20, Cys-23, Cys-35, and Cys-38. The segment at Cys-20–Cys-38 adopts a C4-type zinc-finger fold.

Belongs to the eukaryotic ribosomal protein eL37 family. Zn(2+) is required as a cofactor.

In terms of biological role, binds to the 23S rRNA. This chain is Large ribosomal subunit protein eL37, found in Methanococcus maripaludis (strain DSM 14266 / JCM 13030 / NBRC 101832 / S2 / LL).